A 260-amino-acid chain; its full sequence is Thiamine thiazole synthase (260 aa).

NAD(+)-binding positions include S41, 60 to 61, G68, V131, and 159 to 161; these read ER and HVD. The Fe cation site is built by D161 and H176. M225 contacts NAD(+). R235 serves as a coordination point for glycine.

It belongs to the THI4 family. As to quaternary structure, homooctamer; tetramer of dimers. Fe(2+) is required as a cofactor.

It catalyses the reaction hydrogen sulfide + glycine + NAD(+) = ADP-5-ethyl-4-methylthiazole-2-carboxylate + nicotinamide + 3 H2O + H(+). The protein operates within cofactor biosynthesis; thiamine diphosphate biosynthesis. Functionally, involved in the biosynthesis of the thiazole moiety of thiamine. Catalyzes the conversion of NAD and glycine to adenosine diphosphate 5-(2-hydroxyethyl)-4-methylthiazole-2-carboxylate (ADT), an adenylated thiazole intermediate, using free sulfide as a source of sulfur. In Archaeoglobus fulgidus (strain ATCC 49558 / DSM 4304 / JCM 9628 / NBRC 100126 / VC-16), this protein is Thiamine thiazole synthase.